The following is a 268-amino-acid chain: Unknown seed protein USP (268 aa).

Positions M1–G25 are cleaved as a signal peptide. Positions L68–N259 constitute a BURP domain.

In terms of tissue distribution, expressed in seeds. Detected only in the embryo. In germinating seedlings, detected in roots, root caps, root hairs, vascular bundle, mesophyll cells and epidermal cells of the cotyledons and the hypocotyl.

It is found in the golgi apparatus. It localises to the golgi stack. Its subcellular location is the prevacuolar compartment. Its function is as follows. Associated with the protein storage vacuole formation. The polypeptide is Unknown seed protein USP (Vicia faba (Broad bean)).